Here is a 670-residue protein sequence, read N- to C-terminus: WD repeat-containing protein 48 homolog (670 aa).

WD repeat units lie at residues 13 to 52 (RHRN…SQEP), 59 to 98 (HHND…CMST), 101 to 140 (THRD…ALTA), 152 to 191 (GSKD…KIAK), 194 to 233 (GHTE…CIQT), 236 to 275 (VHSE…NSVL), and 278 to 317 (EERA…KLSN). Positions 321–348 (SSNSSINSGGGGDGTPVTNSASNATPAS) are disordered. Residues 338–348 (TNSASNATPAS) show a composition bias toward low complexity. The WD 8 repeat unit spans residues 359–398 (KGGAAIKKYHVLNDKRFMLTKDSEQNVAIYDVLKVKKVED). Positions 613–625 (GGGGGSSTGGGGN) are enriched in gly residues. A disordered region spans residues 613 to 645 (GGGGGSSTGGGGNSNSSQNNSQSDANSEGSQVP). Residues 626 to 635 (SNSSQNNSQS) show a composition bias toward low complexity.

It belongs to the WD repeat WDR48 family. Catalytic component of the Usp12-46 deubiquitylase complex consisting of Usp12-46, Wdr20 and Uaf1; regulatory subunit that, together wtih Wdr20, stabilizes Usp12-46. The Usp12-46 deubiquitylase complex associates with arr/arrow; the interaction leads to deubiquitination and stabilization of arr/arrow.

Its function is as follows. Regulatory component of the Usp12-46 deubiquitylase complex. activates deubiquitination by increasing the catalytic turnover without increasing the affinity of deubiquitinating enzymes for the substrate. The complex deubiquitylates the wg/wingless-signaling receptor arr/arrow, which stabilizes the receptor and increases its concentration at the cell surface; this enhances the sensitivity of cells to wg/wingless-signal stimulation. This increases the amplitude and spatial range of the signaling response to the wg/wingless morphogen gradient, facilitating the precise concentration-dependent regulation of its target genes. Together with Wdr20 and Usp12-46 required for wg/wingless-mediated signaling in the wing imaginal disc and for wg/wingless-dependent regulation of intestinal stem cell proliferation. The sequence is that of WD repeat-containing protein 48 homolog from Culex quinquefasciatus (Southern house mosquito).